The primary structure comprises 103 residues: Cell division protein FtsB (103 aa).

Over 1-3 the chain is Cytoplasmic; that stretch reads MGK. The helical transmembrane segment at 4–21 threads the bilayer; that stretch reads LTLLLLAILVWLQYSLWF. Topologically, residues 22 to 103 are periplasmic; that stretch reads GKNGIHDYTR…RAQSAGQNNR (82 aa). Residues 31–71 adopt a coiled-coil conformation; the sequence is RVNDDVAAQQATNAKLKARNDQLFAEIDDLNGGQEALEERA.

This sequence belongs to the FtsB family. In terms of assembly, part of a complex composed of FtsB, FtsL and FtsQ.

The protein localises to the cell inner membrane. Essential cell division protein. May link together the upstream cell division proteins, which are predominantly cytoplasmic, with the downstream cell division proteins, which are predominantly periplasmic. This Shigella boydii serotype 18 (strain CDC 3083-94 / BS512) protein is Cell division protein FtsB.